A 153-amino-acid chain; its full sequence is SsrA-binding protein (153 aa).

This sequence belongs to the SmpB family.

Its subcellular location is the cytoplasm. Required for rescue of stalled ribosomes mediated by trans-translation. Binds to transfer-messenger RNA (tmRNA), required for stable association of tmRNA with ribosomes. tmRNA and SmpB together mimic tRNA shape, replacing the anticodon stem-loop with SmpB. tmRNA is encoded by the ssrA gene; the 2 termini fold to resemble tRNA(Ala) and it encodes a 'tag peptide', a short internal open reading frame. During trans-translation Ala-aminoacylated tmRNA acts like a tRNA, entering the A-site of stalled ribosomes, displacing the stalled mRNA. The ribosome then switches to translate the ORF on the tmRNA; the nascent peptide is terminated with the 'tag peptide' encoded by the tmRNA and targeted for degradation. The ribosome is freed to recommence translation, which seems to be the essential function of trans-translation. The protein is SsrA-binding protein of Paramagnetospirillum magneticum (strain ATCC 700264 / AMB-1) (Magnetospirillum magneticum).